A 499-amino-acid polypeptide reads, in one-letter code: Probable mitochondrial-processing peptidase subunit alpha-2, chloroplastic/mitochondrial (499 aa).

The protein belongs to the peptidase M16 family. In terms of assembly, heterodimer of alpha and beta subunits, forming the mitochondrial processing protease (MPP) in which subunit alpha is involved in substrate recognition and binding and subunit beta is the catalytic subunit. Component of the ubiquinol-cytochrome c oxidoreductase (cytochrome b-c1 complex, complex III, CIII), a multisubunit enzyme composed of 10 subunits. The complex is composed of 3 respiratory subunits cytochrome b (MT-CYB), cytochrome c1 (CYC1-1 or CYC1-2) and Rieske protein (UCR1-1 or UCR1-2), 2 core protein subunits MPPalpha1 (or MPPalpha2) and MPPB, and 5 low-molecular weight protein subunits QCR7-1 (or QCR7-2), UCRQ-1 (or UCRQ-2), QCR9, UCRY and probably QCR6-1 (or QCR6-2). The complex exists as an obligatory dimer and forms supercomplexes (SCs) in the inner mitochondrial membrane with NADH-ubiquinone oxidoreductase (complex I, CI), resulting in different assemblies (supercomplexes SCI(1)III(2) and SCI(2)III(4)). Interacts with TIM23-2.

It is found in the plastid. Its subcellular location is the chloroplast stroma. It localises to the mitochondrion matrix. The protein resides in the mitochondrion inner membrane. Functionally, substrate recognition and binding subunit of the essential mitochondrial processing protease (MPP), which cleaves the mitochondrial sequence off newly imported precursors proteins. Its function is as follows. Component of the ubiquinol-cytochrome c oxidoreductase, a multisubunit transmembrane complex that is part of the mitochondrial electron transport chain which drives oxidative phosphorylation. The respiratory chain contains 3 multisubunit complexes succinate dehydrogenase (complex II, CII), ubiquinol-cytochrome c oxidoreductase (cytochrome b-c1 complex, complex III, CIII) and cytochrome c oxidase (complex IV, CIV), that cooperate to transfer electrons derived from NADH and succinate to molecular oxygen, creating an electrochemical gradient over the inner membrane that drives transmembrane transport and the ATP synthase. The cytochrome b-c1 complex catalyzes electron transfer from ubiquinol to cytochrome c, linking this redox reaction to translocation of protons across the mitochondrial inner membrane, with protons being carried across the membrane as hydrogens on the quinol. In the process called Q cycle, 2 protons are consumed from the matrix, 4 protons are released into the intermembrane space and 2 electrons are passed to cytochrome c. The polypeptide is Probable mitochondrial-processing peptidase subunit alpha-2, chloroplastic/mitochondrial (MPPalpha2) (Arabidopsis thaliana (Mouse-ear cress)).